We begin with the raw amino-acid sequence, 190 residues long: Large ribosomal subunit protein bL17 (190 aa).

The span at 135-165 (AKAAPAAEEAPAEEAPAAEEAATEEAPAAEE) shows a compositional bias: low complexity. The segment at 135–190 (AKAAPAAEEAPAEEAPAAEEAATEEAPAAEETATEEAAAEEAPAAEEAPAEEKDAK) is disordered.

The protein belongs to the bacterial ribosomal protein bL17 family. In terms of assembly, part of the 50S ribosomal subunit. Contacts protein L32.

This chain is Large ribosomal subunit protein bL17, found in Pseudarthrobacter chlorophenolicus (strain ATCC 700700 / DSM 12829 / CIP 107037 / JCM 12360 / KCTC 9906 / NCIMB 13794 / A6) (Arthrobacter chlorophenolicus).